We begin with the raw amino-acid sequence, 368 residues long: Phosphoserine aminotransferase (368 aa).

R42 contributes to the L-glutamate binding site. Residues 76 to 77, W102, T152, D179, and Q202 contribute to the pyridoxal 5'-phosphate site; that span reads AS. K203 carries the post-translational modification N6-(pyridoxal phosphate)lysine. 245 to 246 contacts pyridoxal 5'-phosphate; sequence NT.

Belongs to the class-V pyridoxal-phosphate-dependent aminotransferase family. SerC subfamily. In terms of assembly, homodimer. The cofactor is pyridoxal 5'-phosphate.

The protein localises to the cytoplasm. It carries out the reaction O-phospho-L-serine + 2-oxoglutarate = 3-phosphooxypyruvate + L-glutamate. The catalysed reaction is 4-(phosphooxy)-L-threonine + 2-oxoglutarate = (R)-3-hydroxy-2-oxo-4-phosphooxybutanoate + L-glutamate. It participates in amino-acid biosynthesis; L-serine biosynthesis; L-serine from 3-phospho-D-glycerate: step 2/3. The protein operates within cofactor biosynthesis; pyridoxine 5'-phosphate biosynthesis; pyridoxine 5'-phosphate from D-erythrose 4-phosphate: step 3/5. Catalyzes the reversible conversion of 3-phosphohydroxypyruvate to phosphoserine and of 3-hydroxy-2-oxo-4-phosphonooxybutanoate to phosphohydroxythreonine. This is Phosphoserine aminotransferase from Nitrosomonas europaea (strain ATCC 19718 / CIP 103999 / KCTC 2705 / NBRC 14298).